Reading from the N-terminus, the 593-residue chain is High affinity cGMP-specific 3',5'-cyclic phosphodiesterase 9A (593 aa).

Residues 87–141 (SAGVEDKRTTSRGQSAERPLRDRRVVGLEQPRREGAFESGQVEPRPREPQGCYQE) are disordered. Positions 104–122 (RPLRDRRVVGLEQPRREGA) are enriched in basic and acidic residues. In terms of domain architecture, PDEase spans 236 to 557 (PRRDVPTYPK…DRYEELKRID (322 aa)). The active-site Proton donor is the His-312. 312–316 (HNFRH) contacts 3',5'-cyclic GMP. Residues His-316, His-352, and Asp-353 each contribute to the Zn(2+) site. Asp-353 is a binding site for 3',5'-cyclic GMP. Residue Asp-353 participates in Mg(2+) binding. Ser-379 carries the phosphoserine modification. 3',5'-cyclic GMP is bound by residues Asp-462, Tyr-484, and 512 to 513 (AQ). Asp-462 provides a ligand contact to Zn(2+). Positions 564–593 (QKKTDSLTSGATEKSRERSRDVKNSEGDCA) are disordered. Over residues 576–593 (EKSRERSRDVKNSEGDCA) the composition is skewed to basic and acidic residues.

The protein belongs to the cyclic nucleotide phosphodiesterase family. PDE9 subfamily. Homodimer. Requires Zn(2+) as cofactor. Mg(2+) is required as a cofactor. As to expression, expressed in all tissues examined (testis, brain, small intestine, skeletal muscle, heart, lung, thymus, spleen, placenta, kidney, liver, pancreas, ovary and prostate) except blood. Highest levels in brain, heart, kidney, spleen, prostate and colon. Isoform PDE9A12 is found in prostate. In brain, present in the cortex, cerebellum, and subiculum (at protein level). In heart, primarily localizes to myocytes.

The protein resides in the cell projection. It is found in the ruffle membrane. Its subcellular location is the cytoplasm. It localises to the perinuclear region. The protein localises to the golgi apparatus. The protein resides in the endoplasmic reticulum. It is found in the cell membrane. Its subcellular location is the sarcolemma. The enzyme catalyses 3',5'-cyclic GMP + H2O = GMP + H(+). It functions in the pathway purine metabolism; 3',5'-cyclic GMP degradation; GMP from 3',5'-cyclic GMP: step 1/1. With respect to regulation, inhibited by zaprinast; inhibitor is however not specific to PDE9A. Specifically inhibited by BAY-73-6691 (1-(2-chlorophenyl)-6-((2R)-3,3,3- trifluoro-2-methylpropyl)-1,5-dihydro-4H-pyrazolo(3,4-d)pyrimidine-4-one). BAY-73-9961 has two enantiomers, (R) and (S), due to the presence of a chiral center, and both forms vary in their pattern of interaction. Specifically inhibited by PF-4181366 (4H-Pyrazolo[3,4-d]pyrimidin-4-one, 1- cyclopentyl-1,5-dihydro-6-[(3S,4S)-4-methyl- 1-(6-quinoxalinylmethyl)-3-pyrrolidinyl]-one). Specifically inhibited by PF-4449613 ((R)-6-(1-(3-phenoxyazetidin-1-yl)ethyl)-1-(tetrahydro-2H-pyran-4-yl)-1H-pyrazolo[3,4-d]pyrimidin- 4(5H)-one). Specifically inhibited by inhibitor 28 (2-((1-(2-Chlorophenyl)-4-hydroxy-1Hpyrazolo[ 3,4-d]pyrimidin-6-yl)amino)-N-(4- methoxyphenyl)propanamide): inhibitor forms a hydrogen bond with Tyr-484 and Gln-513. Specifically inhibited by 1-Cyclopentyl-6-[(1r)-1-(3-phenoxyazetidin- 1-Yl)ethyl]-1,5-dihydro-4h-pyrazolo[3,4-D] pyrimidin-4-one: inhibitor forms a hydrogen bond with Tyr-484 and Gln-513. Functionally, specifically hydrolyzes the second messenger cGMP, which is a key regulator of many important physiological processes. Highly specific: compared to other members of the cyclic nucleotide phosphodiesterase family, has the highest affinity and selectivity for cGMP. Specifically regulates natriuretic-peptide-dependent cGMP signaling in heart, acting as a regulator of cardiac hypertrophy in myocytes and muscle. Does not regulate nitric oxide-dependent cGMP in heart. Additional experiments are required to confirm whether its ability to hydrolyze natriuretic-peptide-dependent cGMP is specific to heart or is a general feature of the protein. In brain, involved in cognitive function, such as learning and long-term memory. This is High affinity cGMP-specific 3',5'-cyclic phosphodiesterase 9A from Homo sapiens (Human).